The chain runs to 147 residues: Large ribosomal subunit protein uL15 (147 aa).

Positions 1-57 are disordered; sequence MRLHDVKPQKGSKKRKKRVARGISAGQGASAGLGMRGQKSRSGSGTRPGFEGGQQPL. Positions 10–20 are enriched in basic residues; it reads KGSKKRKKRVA.

It belongs to the universal ribosomal protein uL15 family. In terms of assembly, part of the 50S ribosomal subunit.

Its function is as follows. Binds to the 23S rRNA. This chain is Large ribosomal subunit protein uL15, found in Nostoc punctiforme (strain ATCC 29133 / PCC 73102).